A 40-amino-acid chain; its full sequence is Photosystem II reaction center protein X (40 aa).

Over 1-11 the chain is Lumenal; that stretch reads TITPSLKGFFI. Residues 12 to 28 form a helical membrane-spanning segment; that stretch reads GLLSGAVVLGLTFAVLI. At 29 to 40 the chain is on the cytoplasmic side; the sequence is AISQIDKVQRSL.

The protein belongs to the PsbX family. Type 1 subfamily. In terms of assembly, PSII is composed of 1 copy each of membrane proteins PsbA, PsbB, PsbC, PsbD, PsbE, PsbF, PsbH, PsbI, PsbJ, PsbK, PsbL, PsbM, PsbT, PsbX, PsbY, PsbZ, Psb30/Ycf12, peripheral proteins PsbO, CyanoQ (PsbQ), PsbU, PsbV and a large number of cofactors. It forms dimeric complexes. PSII binds multiple chlorophylls, carotenoids and specific lipids. is required as a cofactor.

Its subcellular location is the cellular thylakoid membrane. Involved in the binding and/or turnover of quinones at the Q(B) site of photosystem II (PSII). PSII is a light-driven water plastoquinone oxidoreductase, using light energy to abstract electrons from H(2)O, generating a proton gradient subsequently used for ATP formation. This chain is Photosystem II reaction center protein X, found in Thermostichus vulcanus (Synechococcus vulcanus).